A 500-amino-acid polypeptide reads, in one-letter code: Cysteine-rich secretory protein LCCL domain-containing 1 (500 aa).

A signal peptide spans 1–23; the sequence is MKCTAREWLRVTTVLFMARAIPA. In terms of domain architecture, SCP spans 66-206; sequence LDLHNKLRSQ…PKAVYLVCNY (141 aa). The span at 254–280 shows a compositional bias: basic and acidic residues; it reads EETNEIERQQSQVHDTHVRTRSDDSSR. The interval 254–281 is disordered; it reads EETNEIERQQSQVHDTHVRTRSDDSSRN. LCCL domains follow at residues 289–384 and 390–492; these read MSQI…ANSF and TVQA…PGGK. Intrachain disulfides connect cysteine 295-cysteine 313, cysteine 317-cysteine 337, cysteine 396-cysteine 418, and cysteine 422-cysteine 445.

The protein belongs to the CRISP family.

The protein localises to the secreted. In Homo sapiens (Human), this protein is Cysteine-rich secretory protein LCCL domain-containing 1 (CRISPLD1).